We begin with the raw amino-acid sequence, 66 residues long: MAKNKDVRVTITLECTNNCAQNNEKKKLGVSRYTTQKNRRNTPTRLELKKFCSYCNKHTIHKEIKK.

The protein belongs to the bacterial ribosomal protein bL33 family.

It localises to the plastid. The protein localises to the chloroplast. The protein is Large ribosomal subunit protein bL33c of Physcomitrium patens (Spreading-leaved earth moss).